The following is a 413-amino-acid chain: uncharacterized protein (413 aa).

This is an uncharacterized protein from Mycoplasma pneumoniae (strain ATCC 29342 / M129 / Subtype 1) (Mycoplasmoides pneumoniae).